Reading from the N-terminus, the 1071-residue chain is Methionine S-methyltransferase (1071 aa).

A2 carries the post-translational modification N-acetylalanine.

This sequence belongs to the class I-like SAM-binding methyltransferase superfamily. As to quaternary structure, homotetramer. Expressed in roots, rosette leaves and cauline leaves. Expressed at a lower level in developing seeds.

It localises to the cytoplasm. The enzyme catalyses L-methionine + S-adenosyl-L-methionine = S-methyl-L-methionine + S-adenosyl-L-homocysteine. In terms of biological role, catalyzes the S-methylmethionine (SMM) biosynthesis from adenosyl-L-homocysteine (AdoMet) and methionine. SMM biosynthesis (by MMT1) and degradation (by HMT-1, HMT-2 and HMT-3) constitute the SMM cycle in plants, which is probably required to achieve short term control of AdoMet level. Also able to catalyze the selenium-methylmethionine (SeMM) from AdoMet and selenium-methionine (SeMet). May play a role in phoem sulfur transport; such function is however not essential. The protein is Methionine S-methyltransferase (MMT1) of Arabidopsis thaliana (Mouse-ear cress).